We begin with the raw amino-acid sequence, 465 residues long: Anthocyanidin 3-O-glucosyltransferase 2 (465 aa).

Residue His-22 is the Proton acceptor of the active site. 2 residues coordinate an anthocyanidin: His-22 and Gln-87. The active-site Charge relay is Asp-122. Thr-145 contributes to the UDP-alpha-D-glucose binding site. An an anthocyanidin-binding site is contributed by His-154. The UDP-alpha-D-glucose site is built by Ala-345, Gln-347, His-362, Trp-365, Asn-366, Ser-367, and Glu-370. An anthocyanidin is bound at residue Gly-385. UDP-alpha-D-glucose is bound by residues Asp-386 and Gln-387.

Belongs to the UDP-glycosyltransferase family. In terms of tissue distribution, highest expression detected in fruit, with very low levels detected in petal and leaf.

It catalyses the reaction an anthocyanidin + UDP-alpha-D-glucose + H(+) = an anthocyanidin 3-O-beta-D-glucoside + UDP. The enzyme catalyses pelargonidin + UDP-alpha-D-glucose = pelargonidin 3-O-beta-D-glucoside + UDP. It carries out the reaction cyanidin + UDP-alpha-D-glucose = cyanidin 3-O-beta-D-glucoside + UDP + H(+). It participates in pigment biosynthesis; anthocyanin biosynthesis. In the presence of other necessary color factors, this glycosylation reaction allows the accumulation of anthocyanin pigments. Anthocyanidins are the preferred substrates, while flavonols are only a minor substrate in vitro. In Fragaria ananassa (Strawberry), this protein is Anthocyanidin 3-O-glucosyltransferase 2.